Here is a 179-residue protein sequence, read N- to C-terminus: Peptidyl-tRNA hydrolase (179 aa).

Residue tyrosine 15 coordinates tRNA. The Proton acceptor role is filled by histidine 20. TRNA is bound by residues tyrosine 66, asparagine 68, and asparagine 114.

It belongs to the PTH family. In terms of assembly, monomer.

It is found in the cytoplasm. It catalyses the reaction an N-acyl-L-alpha-aminoacyl-tRNA + H2O = an N-acyl-L-amino acid + a tRNA + H(+). Its function is as follows. Hydrolyzes ribosome-free peptidyl-tRNAs (with 1 or more amino acids incorporated), which drop off the ribosome during protein synthesis, or as a result of ribosome stalling. In terms of biological role, catalyzes the release of premature peptidyl moieties from peptidyl-tRNA molecules trapped in stalled 50S ribosomal subunits, and thus maintains levels of free tRNAs and 50S ribosomes. The polypeptide is Peptidyl-tRNA hydrolase (Chlamydia trachomatis serovar L2 (strain ATCC VR-902B / DSM 19102 / 434/Bu)).